The chain runs to 202 residues: Holliday junction branch migration complex subunit RuvA (202 aa).

Residues methionine 1–alanine 63 form a domain I region. The segment at aspartate 64–proline 142 is domain II. The tract at residues glutamate 143–asparagine 152 is flexible linker. The domain III stretch occupies residues asparagine 152–alanine 202.

It belongs to the RuvA family. Homotetramer. Forms an RuvA(8)-RuvB(12)-Holliday junction (HJ) complex. HJ DNA is sandwiched between 2 RuvA tetramers; dsDNA enters through RuvA and exits via RuvB. An RuvB hexamer assembles on each DNA strand where it exits the tetramer. Each RuvB hexamer is contacted by two RuvA subunits (via domain III) on 2 adjacent RuvB subunits; this complex drives branch migration. In the full resolvosome a probable DNA-RuvA(4)-RuvB(12)-RuvC(2) complex forms which resolves the HJ.

It is found in the cytoplasm. The RuvA-RuvB-RuvC complex processes Holliday junction (HJ) DNA during genetic recombination and DNA repair, while the RuvA-RuvB complex plays an important role in the rescue of blocked DNA replication forks via replication fork reversal (RFR). RuvA specifically binds to HJ cruciform DNA, conferring on it an open structure. The RuvB hexamer acts as an ATP-dependent pump, pulling dsDNA into and through the RuvAB complex. HJ branch migration allows RuvC to scan DNA until it finds its consensus sequence, where it cleaves and resolves the cruciform DNA. The chain is Holliday junction branch migration complex subunit RuvA from Thermobifida fusca (strain YX).